Reading from the N-terminus, the 159-residue chain is SsrA-binding protein (159 aa).

Residues 134-159 are disordered; the sequence is KLHDKRETSKERDWNRQKNRLLKERG. Residues 137 to 159 show a composition bias toward basic and acidic residues; sequence DKRETSKERDWNRQKNRLLKERG.

This sequence belongs to the SmpB family.

It is found in the cytoplasm. Functionally, required for rescue of stalled ribosomes mediated by trans-translation. Binds to transfer-messenger RNA (tmRNA), required for stable association of tmRNA with ribosomes. tmRNA and SmpB together mimic tRNA shape, replacing the anticodon stem-loop with SmpB. tmRNA is encoded by the ssrA gene; the 2 termini fold to resemble tRNA(Ala) and it encodes a 'tag peptide', a short internal open reading frame. During trans-translation Ala-aminoacylated tmRNA acts like a tRNA, entering the A-site of stalled ribosomes, displacing the stalled mRNA. The ribosome then switches to translate the ORF on the tmRNA; the nascent peptide is terminated with the 'tag peptide' encoded by the tmRNA and targeted for degradation. The ribosome is freed to recommence translation, which seems to be the essential function of trans-translation. The protein is SsrA-binding protein of Sinorhizobium fredii (strain NBRC 101917 / NGR234).